A 205-amino-acid chain; its full sequence is Small ribosomal subunit protein uS4 (205 aa).

The segment covering 1–16 (MSKRETTKYKIDRRMG) has biased composition (basic and acidic residues). Residues 1–46 (MSKRETTKYKIDRRMGENIWGRPKSPVNRRDYGPGQHGQRRKGKLS) form a disordered region. Positions 94 to 157 (SRLDAVIYRA…KQLVLVLESV (64 aa)) constitute an S4 RNA-binding domain.

It belongs to the universal ribosomal protein uS4 family. As to quaternary structure, part of the 30S ribosomal subunit. Contacts protein S5. The interaction surface between S4 and S5 is involved in control of translational fidelity.

Functionally, one of the primary rRNA binding proteins, it binds directly to 16S rRNA where it nucleates assembly of the body of the 30S subunit. Its function is as follows. With S5 and S12 plays an important role in translational accuracy. The polypeptide is Small ribosomal subunit protein uS4 (Bartonella henselae (strain ATCC 49882 / DSM 28221 / CCUG 30454 / Houston 1) (Rochalimaea henselae)).